The chain runs to 492 residues: Protein KOKOPELLI (492 aa).

Disordered regions lie at residues 218–354 (VTSP…RNVM) and 394–426 (SKFHHKHQEKSKERKRPMSESKGLTTHKQQHQG). Acidic residues predominate over residues 256 to 270 (QETETFDDDSSETEA). Positions 287–305 (STSQEYSGETGSSSGSEWE) are enriched in low complexity. A compositionally biased stretch (polar residues) spans 317–336 (ESSYPPQNDDSVSEVSTSPP). Composition is skewed to basic and acidic residues over residues 337–348 (HTDRDTSREPGK) and 403–412 (KSKERKRPMS).

Mostly expressed in pollen and open flowers and, to a lower extent, in closed flowers.

Its function is as follows. Positively regulates reproductive function by facilitating male gametophyte formation and double fertilization. This chain is Protein KOKOPELLI, found in Arabidopsis thaliana (Mouse-ear cress).